A 286-amino-acid chain; its full sequence is Putative sugar uptake protein lmo0176 (286 aa).

A run of 8 helical transmembrane segments spans residues 4-26 (MIAL…FGGS), 33-55 (GMTL…VYTL), 114-136 (LRII…TSYA), 149-167 (GLIT…VVLI), 177-194 (AILP…IMTH), 207-226 (LLLT…MVHA), 230-252 (VGVA…GGII), and 264-283 (LFVI…IGVA).

It belongs to the GRP transporter (TC 2.A.7.5) family.

The protein localises to the cell membrane. The polypeptide is Putative sugar uptake protein lmo0176 (Listeria monocytogenes serovar 1/2a (strain ATCC BAA-679 / EGD-e)).